The sequence spans 112 residues: Photosystem II reaction center Psb28 protein (112 aa).

The protein belongs to the Psb28 family. As to quaternary structure, part of the photosystem II complex.

It localises to the cellular thylakoid membrane. This chain is Photosystem II reaction center Psb28 protein, found in Microcystis aeruginosa (strain NIES-843 / IAM M-2473).